A 903-amino-acid polypeptide reads, in one-letter code: Pentatricopeptide repeat-containing protein At3g02330, mitochondrial (903 aa).

The N-terminal 31 residues, 1 to 31, are a transit peptide targeting the mitochondrion; that stretch reads MAESLRLLHMTRSVVSFNRCLTEKISYRRVP. PPR repeat units lie at residues 47–81, 82–112, 113–143, 144–178, 179–213, 214–244, 245–279, 280–314, 346–380, 381–415, 416–446, 447–481, 482–515, 516–550, 567–601, 602–636, 637–667, 668–702, 703–738, and 739–769; these read STTN…GFRP, TTFV…MPLR, DVVS…MPVR, DVVS…GIEF, DGRT…GCDT, DVVA…IPEK, NSVS…NAGV, SQSI…DFAA, NRQS…GLGF, DEIS…SLSL, DVCV…MRRR, DAVS…RIEP, DEFT…GMAS, NSSV…ANVS, MCVS…GITP, DKFT…ELQS, DVYI…SLRR, DFVT…NIKP, NHVT…GLDP, and QLPH…MPFE. The interval 774-850 is type E motif; the sequence is IWRTLLGVCT…EPGCSWVELK (77 aa). Positions 851–881 are type E(+) motif; sequence DELHVFLVGDKAHPRWEEIYEELGLIYSEMK.

The protein belongs to the PPR family. PCMP-E subfamily. As to quaternary structure, interacts with MORF1/RIP8.

The protein resides in the mitochondrion. Its function is as follows. Involved in C-to-U editing of mitochondrial RNA. Required for RNA editing at 8 sites in 6 different mRNAs in mitochondria. The protein is Pentatricopeptide repeat-containing protein At3g02330, mitochondrial (PCMP-E90) of Arabidopsis thaliana (Mouse-ear cress).